A 91-amino-acid chain; its full sequence is Small ribosomal subunit protein uS19 (91 aa).

The protein belongs to the universal ribosomal protein uS19 family.

Protein S19 forms a complex with S13 that binds strongly to the 16S ribosomal RNA. The sequence is that of Small ribosomal subunit protein uS19 from Lactobacillus delbrueckii subsp. bulgaricus (strain ATCC 11842 / DSM 20081 / BCRC 10696 / JCM 1002 / NBRC 13953 / NCIMB 11778 / NCTC 12712 / WDCM 00102 / Lb 14).